Reading from the N-terminus, the 217-residue chain is Probable GTP-binding protein EngB (217 aa).

In terms of domain architecture, EngB-type G spans 37 to 214; sequence AGVEVAFAGR…RAAMARLIGE (178 aa). GTP is bound by residues 45-52, 72-76, 92-95, 159-162, and 193-195; these read GRSNVGKS, GRTQE, DMPG, TKAD, and TSS. Mg(2+)-binding residues include serine 52 and threonine 74.

The protein belongs to the TRAFAC class TrmE-Era-EngA-EngB-Septin-like GTPase superfamily. EngB GTPase family. Requires Mg(2+) as cofactor.

Necessary for normal cell division and for the maintenance of normal septation. In Nitrobacter hamburgensis (strain DSM 10229 / NCIMB 13809 / X14), this protein is Probable GTP-binding protein EngB.